The chain runs to 64 residues: Alpha-conotoxin CnIC (64 aa).

An N-terminal signal peptide occupies residues 1–21 (MGMRMMFTVFLLVVLTTTVVS). Positions 22–47 (FPSDSASDVRDDEAKDERSDMYKSKR) are excised as a propeptide. Asn48 carries the deamidated asparagine; in CnIH; partial modification. Cystine bridges form between Cys51–Cys56 and Cys52–Cys62. Position 62 is a cysteine amide (Cys62).

Belongs to the conotoxin A superfamily. As to expression, expressed by the venom duct.

The protein resides in the secreted. In terms of biological role, alpha-conotoxins act on postsynaptic membranes, they bind to the nicotinic acetylcholine receptors (nAChR) and thus inhibit them. This chain is Alpha-conotoxin CnIC, found in Conus consors (Singed cone).